Reading from the N-terminus, the 693-residue chain is TBC1 domain family member 14 (693 aa).

Position 91 is a phosphoserine (S91). Disordered stretches follow at residues 108–130 (PSCAPPAPSSTEREQSVRKSSTF) and 271–304 (NAQKDSKRIQKEYEDKAGRPSKPPSPKQNVRKNL). The span at 271–288 (NAQKDSKRIQKEYEDKAG) shows a compositional bias: basic and acidic residues. S295 bears the Phosphoserine mark. One can recognise a Rab-GAP TBC domain in the interval 401 to 611 (GIPPSVRGKV…RIWDVFCRDG (211 aa)).

As to quaternary structure, interacts with ULK1. May interact with RAB11A and RAB11B, but does not exhibit any GTPase-activating activity toward these proteins. Interacts with TRAPPC8.

The protein localises to the golgi apparatus. It localises to the cis-Golgi network. Its subcellular location is the trans-Golgi network. Plays a role in the regulation of starvation-induced autophagosome formation. Together with the TRAPPIII complex, regulates a constitutive trafficking step from peripheral recycling endosomes to the early Golgi, maintaining the cycling pool of ATG9 required for initiation of autophagy. In Homo sapiens (Human), this protein is TBC1 domain family member 14 (TBC1D14).